The following is a 338-amino-acid chain: Glycerol-3-phosphate dehydrogenase [NAD(P)+] (338 aa).

NADPH contacts are provided by S13, W14, and K108. K108, G139, and S141 together coordinate sn-glycerol 3-phosphate. Residue A143 coordinates NADPH. Sn-glycerol 3-phosphate contacts are provided by K194, D247, S257, R258, and N259. The active-site Proton acceptor is K194. NADPH is bound at residue R258. Residues V282 and E284 each contribute to the NADPH site.

This sequence belongs to the NAD-dependent glycerol-3-phosphate dehydrogenase family.

It localises to the cytoplasm. It carries out the reaction sn-glycerol 3-phosphate + NAD(+) = dihydroxyacetone phosphate + NADH + H(+). The enzyme catalyses sn-glycerol 3-phosphate + NADP(+) = dihydroxyacetone phosphate + NADPH + H(+). It functions in the pathway membrane lipid metabolism; glycerophospholipid metabolism. Its function is as follows. Catalyzes the reduction of the glycolytic intermediate dihydroxyacetone phosphate (DHAP) to sn-glycerol 3-phosphate (G3P), the key precursor for phospholipid synthesis. This chain is Glycerol-3-phosphate dehydrogenase [NAD(P)+], found in Listeria innocua serovar 6a (strain ATCC BAA-680 / CLIP 11262).